The sequence spans 358 residues: Molybdenum import ATP-binding protein ModC (358 aa).

Residues 3–228 (INVKQKLGDL…LEMRPWLPAK (226 aa)) enclose the ABC transporter domain. 30-37 (GRSGAGKT) provides a ligand contact to ATP. Residues 289 to 356 (QTSIRNVLLA…IKGVSVTKDD (68 aa)) form the Mop domain.

Belongs to the ABC transporter superfamily. Molybdate importer (TC 3.A.1.8) family. As to quaternary structure, the complex is composed of two ATP-binding proteins (ModC), two transmembrane proteins (ModB) and a solute-binding protein (ModA).

The protein resides in the cell inner membrane. The catalysed reaction is molybdate(out) + ATP + H2O = molybdate(in) + ADP + phosphate + H(+). Its function is as follows. Part of the ABC transporter complex ModABC involved in molybdenum import. Responsible for energy coupling to the transport system. The protein is Molybdenum import ATP-binding protein ModC of Photobacterium profundum (strain SS9).